Reading from the N-terminus, the 410-residue chain is Multifunctional CCA protein (410 aa).

Residues glycine 8 and arginine 11 each coordinate ATP. Residues glycine 8 and arginine 11 each contribute to the CTP site. Positions 21 and 23 each coordinate Mg(2+). Residues arginine 91, arginine 137, and arginine 140 each coordinate ATP. CTP is bound by residues arginine 91, arginine 137, and arginine 140. The 102-residue stretch at 225–326 (SGIHTLMTLQ…LNVLKKTDAF (102 aa)) folds into the HD domain.

Belongs to the tRNA nucleotidyltransferase/poly(A) polymerase family. Bacterial CCA-adding enzyme type 1 subfamily. As to quaternary structure, monomer. Can also form homodimers and oligomers. The cofactor is Mg(2+). It depends on Ni(2+) as a cofactor.

It carries out the reaction a tRNA precursor + 2 CTP + ATP = a tRNA with a 3' CCA end + 3 diphosphate. It catalyses the reaction a tRNA with a 3' CCA end + 2 CTP + ATP = a tRNA with a 3' CCACCA end + 3 diphosphate. Its function is as follows. Catalyzes the addition and repair of the essential 3'-terminal CCA sequence in tRNAs without using a nucleic acid template. Adds these three nucleotides in the order of C, C, and A to the tRNA nucleotide-73, using CTP and ATP as substrates and producing inorganic pyrophosphate. tRNA 3'-terminal CCA addition is required both for tRNA processing and repair. Also involved in tRNA surveillance by mediating tandem CCA addition to generate a CCACCA at the 3' terminus of unstable tRNAs. While stable tRNAs receive only 3'-terminal CCA, unstable tRNAs are marked with CCACCA and rapidly degraded. This chain is Multifunctional CCA protein, found in Neisseria gonorrhoeae (strain NCCP11945).